The primary structure comprises 922 residues: Translation initiation factor IF-2 (922 aa).

The disordered stretch occupies residues 33–310; that stretch reads KTASSTVQPP…SKRQKRNEYE (278 aa). Over residues 75 to 87 the composition is skewed to low complexity; it reads PAAKAAPKAAAKP. Pro residues-rich tracts occupy residues 88 to 98 and 140 to 150; these read GPKPGPKPGPQ and TPKPGAKPGPK. 2 stretches are compositionally biased toward low complexity: residues 151–169 and 202–211; these read PGGA…GRAP and PGSRPGGAKK. 2 stretches are compositionally biased toward gly residues: residues 215 to 225 and 248 to 292; these read KPGGAKQGGGR and FGGG…GRPG. Residues 296–305 are compositionally biased toward basic residues; the sequence is RKGRKSKRQK. Residues 418–590 form the tr-type G domain; it reads QRPPVVTVMG…VLLTADASLD (173 aa). The G1 stretch occupies residues 427–434; it reads GHVDHGKT. 427–434 provides a ligand contact to GTP; sequence GHVDHGKT. The interval 452–456 is G2; the sequence is GITQH. The G3 stretch occupies residues 477 to 480; it reads DTPG. GTP is bound by residues 477–481 and 531–534; these read DTPGH and NKID. The G4 stretch occupies residues 531–534; that stretch reads NKID. Residues 567–569 form a G5 region; it reads SAK.

Belongs to the TRAFAC class translation factor GTPase superfamily. Classic translation factor GTPase family. IF-2 subfamily.

It is found in the cytoplasm. Functionally, one of the essential components for the initiation of protein synthesis. Protects formylmethionyl-tRNA from spontaneous hydrolysis and promotes its binding to the 30S ribosomal subunits. Also involved in the hydrolysis of GTP during the formation of the 70S ribosomal complex. In Corynebacterium jeikeium (strain K411), this protein is Translation initiation factor IF-2.